Reading from the N-terminus, the 362-residue chain is MKKTALYSWHEQAGAKIIDFGGYLMPVQYSGIIAEHKAVREAAGLFDVSHMGNFYVRGVRAGEFLQYLTTNDLSKVSDGEAQYNLMLYTDGGVVDDLIIYRIDAETYFLIVNASNAQKDYAWIQKHIGAFEGVSLEDRTDELSLVALQGPMSGAILRKVFPDEDCNTLASFRFRKVYYNGTELLIARTGYTGEQGVEICLPNEAALELWSVLMKAGEEYGIQPIGLGARDTLRLEMGYSLYGHEIDSTVNPLEARLKWVVKMEKGPFIGKEACRQVELNPRYAVAGFSLDGRALPRQHFRLYNSDRQEIGTVCSGTLSPTLQEPIGTCSILREYSRPGTHVMVEIRGTMHQGVIRALPFVQR.

It belongs to the GcvT family. The glycine cleavage system is composed of four proteins: P, T, L and H.

The catalysed reaction is N(6)-[(R)-S(8)-aminomethyldihydrolipoyl]-L-lysyl-[protein] + (6S)-5,6,7,8-tetrahydrofolate = N(6)-[(R)-dihydrolipoyl]-L-lysyl-[protein] + (6R)-5,10-methylene-5,6,7,8-tetrahydrofolate + NH4(+). Its function is as follows. The glycine cleavage system catalyzes the degradation of glycine. The polypeptide is Aminomethyltransferase (Chlorobium limicola (strain DSM 245 / NBRC 103803 / 6330)).